A 1012-amino-acid chain; its full sequence is Structural polyprotein (1012 aa).

Asp30 serves as a coordination point for a divalent metal cation. The 243-residue stretch at 513-755 (ADKGYEVVAN…AGRQYHLAMA (243 aa)) folds into the Peptidase S50 domain. The Nucleophile role is filled by Ser652. The active site involves Lys692. A disordered region spans residues 970 to 1012 (MEMKHRNPRRAPPKPKPKPNAPTQRPPGRLGRWIRTVSDEDLE). The segment covering 975–986 (RNPRRAPPKPKP) has biased composition (basic residues). The tract at residues 1003–1012 (IRTVSDEDLE) is interaction with VP1 protein.

In terms of assembly, homotrimer. A central divalent metal stabilizes the VP2 trimer. Interacts with host ITGA4/ITGB1. Homodimer. Interacts (via C-terminus) with VP1 in the cytoplasm. Interacts with VP2. Specific enzymatic cleavages yield mature proteins. The capsid assembly seems to be regulated by polyprotein processing. The protease VP4 cleaves itself off the polyprotein, thus releasing pre-VP2 and VP3 within the infected cell. During capsid assembly, the C-terminus of pre-VP2 is further processed by VP4, giving rise to VP2, the external capsid protein and three small peptides that all stay closely associated with the capsid.

It is found in the virion. The protein localises to the host cytoplasm. In terms of biological role, capsid protein VP2 self assembles to form an icosahedral capsid with a T=13 symmetry, about 70 nm in diameter, and consisting of 260 VP2 trimers. The capsid encapsulates the genomic dsRNA. VP2 is also involved in attachment and entry into the host cell by interacting with host ITGA4/ITGB1. Functionally, the precursor of VP2 plays an important role in capsid assembly. First, pre-VP2 and VP2 oligomers assemble to form a procapsid. Then, the pre-VP2 intermediates may be processed into VP2 proteins by proteolytic cleavage mediated by VP4 to obtain the mature virion. The final capsid is composed of pentamers and hexamers but VP2 has a natural tendency to assemble into all-pentameric structures. Therefore pre-VP2 may be required to allow formation of the hexameric structures. Protease VP4 is a serine protease that cleaves the polyprotein into its final products. Pre-VP2 is first partially cleaved, and may be completely processed by VP4 upon capsid maturation. Its function is as follows. Capsid protein VP3 plays a key role in virion assembly by providing a scaffold for the capsid made of VP2. May self-assemble to form a T=4-like icosahedral inner-capsid composed of at least 180 trimers. Plays a role in genomic RNA packaging by recruiting VP1 into the capsid and interacting with the dsRNA genome segments to form a ribonucleoprotein complex. Additionally, the interaction of the VP3 C-terminal tail with VP1 removes the inherent structural blockade of the polymerase active site. Thus, VP3 can also function as a transcriptional activator. In terms of biological role, structural peptide 1 is a small peptide derived from pre-VP2 C-terminus. It destabilizes and perforates cell membranes, suggesting a role during entry. Functionally, structural peptide 2 is a small peptide derived from pVP2 C-terminus. It is not essential for the virus viability, but viral growth is affected when missing. Structural peptide 3 is a small peptide derived from pVP2 C-terminus. It is not essential for the virus viability, but viral growth is affected when missing. Its function is as follows. Structural peptide 4 is a small peptide derived from pVP2 C-terminus. It is essential for the virus viability. This is Structural polyprotein from Avian infectious bursal disease virus (strain E) (IBDV).